Here is a 127-residue protein sequence, read N- to C-terminus: E3 ubiquitin-protein ligase PPP1R11 (127 aa).

Disordered stretches follow at residues 1 to 55 and 70 to 127; these read MAEA…EHMG and AFGE…PMQH. The residue at position 2 (A2) is an N-acetylalanine. Low complexity predominate over residues 11–23; it reads ETVTETTVTVTTE. The segment covering 40–55 has biased composition (basic and acidic residues); sequence KKVEWSSDTVDNEHMG. Residues 53 to 63 are atypical RING finger domain 1; the sequence is HMGRRSSKCCC. A phosphoserine mark is found at S74 and S75. T76 carries the post-translational modification Phosphothreonine. Phosphoserine is present on S78. The atypical RING finger domain 2 stretch occupies residues 86 to 95; sequence CGHTHCVRGH. The span at 90 to 100 shows a compositional bias: basic residues; the sequence is HCVRGHRKGRR. Positions 103–127 are enriched in pro residues; it reads TPGPTPTTPPQPPDPSQPPPGPMQH. T110 is subject to Phosphothreonine.

As to quaternary structure, interacts with TLR2 and UBE2D2. Auto-ubiquitinated.

The enzyme catalyses S-ubiquitinyl-[E2 ubiquitin-conjugating enzyme]-L-cysteine + [acceptor protein]-L-lysine = [E2 ubiquitin-conjugating enzyme]-L-cysteine + N(6)-ubiquitinyl-[acceptor protein]-L-lysine.. It participates in protein modification; protein ubiquitination. Atypical E3 ubiquitin-protein ligase which ubiquitinates TLR2 at 'Lys-754' leading to its degradation by the proteasome. Plays a role in regulating inflammatory cytokine release and gram-positive bacterial clearance by functioning, in part, through the ubiquitination and degradation of TLR2. Inhibitor of protein phosphatase 1. The protein is E3 ubiquitin-protein ligase PPP1R11 (Ppp1r11) of Rattus norvegicus (Rat).